The sequence spans 437 residues: Probable inactive DNA (cytosine-5)-methyltransferase DRM1B (437 aa).

UBA domains follow at residues 20–60 (SAPS…LLQL) and 120–164 (EMSE…IYAP). One can recognise an SAM-dependent MTase DRM-type domain in the interval 243–437 (VHRNLPDHAL…LIQLHTTSLC (195 aa)).

This sequence belongs to the class I-like SAM-binding methyltransferase superfamily. DRM-methyltransferase family.

Its subcellular location is the nucleus. In terms of biological role, involved in de novo DNA methylation. Involved in RNA-directed DNA methylation (RdDM). This chain is Probable inactive DNA (cytosine-5)-methyltransferase DRM1B, found in Oryza sativa subsp. japonica (Rice).